The chain runs to 114 residues: Translation initiation factor 1A (114 aa).

In terms of domain architecture, S1-like spans 19–91; it reads SEFRLPGEGE…EKGDIVHKYE (73 aa).

Belongs to the eIF-1A family.

Its function is as follows. Seems to be required for maximal rate of protein biosynthesis. Enhances ribosome dissociation into subunits and stabilizes the binding of the initiator Met-tRNA(I) to 40 S ribosomal subunits. The sequence is that of Translation initiation factor 1A (eIF1A) from Pyrobaculum aerophilum (strain ATCC 51768 / DSM 7523 / JCM 9630 / CIP 104966 / NBRC 100827 / IM2).